The following is a 304-amino-acid chain: Voltage-dependent anion channel-forming protein YneE (304 aa).

4 helical membrane passes run 28–48 (LLLN…YTHL), 50–70 (IKFT…FLGF), 194–214 (VLAG…TLIL), and 220–240 (LFCI…TPFI).

This sequence belongs to the anion channel-forming bestrophin (TC 1.A.46) family.

The protein resides in the cell membrane. In Escherichia coli O157:H7, this protein is Voltage-dependent anion channel-forming protein YneE (yneE).